The following is a 212-amino-acid chain: External core antigen (212 aa).

Positions 1-19 (MQLFHLCLIISCTCPTVQA) are cleaved as a signal peptide. The interval 25–27 (GWL) is HBEAG. The segment at 165–212 (NAPILSTLPETTVVRRRGRSPRRRTPSPRRRRSQSPRRRRSQSRESQC) is disordered. Basic residues predominate over residues 178-205 (VRRRGRSPRRRTPSPRRRRSQSPRRRRS). Residues 184-190 (SPRRRTP) form a 1; half-length repeat. The segment at 184–206 (SPRRRTPSPRRRRSQSPRRRRSQ) is 3 X 8 AA repeats of S-P-R-R-R-R-S-Q. Residues 184-212 (SPRRRTPSPRRRRSQSPRRRRSQSRESQC) constitute a propeptide that is removed on maturation. 2 repeat units span residues 191-198 (SPRRRRSQ) and 199-206 (SPRRRRSQ).

Belongs to the orthohepadnavirus precore antigen family. In terms of assembly, homodimerizes. Phosphorylated. Post-translationally, cleaved by host furin.

It is found in the secreted. Its subcellular location is the host nucleus. In terms of biological role, may regulate immune response to the intracellular capsid in acting as a T-cell tolerogen, by having an immunoregulatory effect which prevents destruction of infected cells by cytotoxic T-cells. This immune regulation may predispose to chronicity during perinatal infections and prevent severe liver injury during adult infections. This Hepatitis B virus genotype D subtype ayw (isolate Italy/CI/1992) (HBV-D) protein is External core antigen.